Here is a 223-residue protein sequence, read N- to C-terminus: 3,4-dihydroxy-2-butanone 4-phosphate synthase (223 aa).

D-ribulose 5-phosphate-binding positions include 47 to 48 (RE), Asp-52, 160 to 164 (RRGHT), and Glu-184. Position 48 (Glu-48) interacts with Mg(2+). His-163 serves as a coordination point for Mg(2+).

This sequence belongs to the DHBP synthase family. In terms of assembly, homodimer. Requires Mg(2+) as cofactor. Mn(2+) serves as cofactor.

The enzyme catalyses D-ribulose 5-phosphate = (2S)-2-hydroxy-3-oxobutyl phosphate + formate + H(+). It participates in cofactor biosynthesis; riboflavin biosynthesis; 2-hydroxy-3-oxobutyl phosphate from D-ribulose 5-phosphate: step 1/1. Functionally, catalyzes the conversion of D-ribulose 5-phosphate to formate and 3,4-dihydroxy-2-butanone 4-phosphate. The sequence is that of 3,4-dihydroxy-2-butanone 4-phosphate synthase from Cupriavidus pinatubonensis (strain JMP 134 / LMG 1197) (Cupriavidus necator (strain JMP 134)).